Consider the following 394-residue polypeptide: Elongation factor Tu (394 aa).

The 195-residue stretch at 10–204 folds into the tr-type G domain; the sequence is KPHLNVGTIG…TLDTYIEDPV (195 aa). Residues 19–26 form a G1 region; it reads GHVDHGKT. Residue 19–26 participates in GTP binding; the sequence is GHVDHGKT. Position 26 (Thr26) interacts with Mg(2+). Residues 60–64 are G2; that stretch reads GITIK. The segment at 81–84 is G3; sequence DCPG. GTP-binding positions include 81-85 and 136-139; these read DCPGH and NKCD. Residues 136 to 139 form a G4 region; it reads NKCD. Residues 174 to 176 are G5; it reads SAL.

It belongs to the TRAFAC class translation factor GTPase superfamily. Classic translation factor GTPase family. EF-Tu/EF-1A subfamily. Monomer.

Its subcellular location is the cytoplasm. It carries out the reaction GTP + H2O = GDP + phosphate + H(+). In terms of biological role, GTP hydrolase that promotes the GTP-dependent binding of aminoacyl-tRNA to the A-site of ribosomes during protein biosynthesis. This Onion yellows phytoplasma (strain OY-M) protein is Elongation factor Tu.